Reading from the N-terminus, the 624-residue chain is MRQFLALAAAASIAVADSCHTFTLANSPPDDKAVALSSYSYCGGYLSASAFVKNLSYDKLVTLYWTNADNKSTPLNAGSLDYVKAASDDQSWELWSLNVTTVPDGVDALLNITYVAASIGKTNSQQLNVQVEATGDPIPTPQIPTIYKPYASPSDFSDDITNWLKPSNDSQTGIAKSFLFNNINIPGAAPGTVIAAQSYSEPDYAYTWVRDASLVMDVVNRLYSSAKSEEKRQLYEKILFQYAKAGAQEQNDPTAISGMGEPKFYLNNTAFTGSWGRPQNDGPATRAITLIEFANAYLANGGSQDTVREQLYDSDKYPQVAPIKKDLQFVASNWSSPSFDLWEEEESAHFYTRLVQRKALLLGADFANDMGDHELSDKLKTQASKLSDTLPEFWDSARQLILYEYGPVLRGKYSYKDISVVLGVMHGYANDNVFSYTNDQILATAYQVSTSFLDVYKVANTTSDESGKPLGIPVGRYPEDVYDGVGTSQGNPWYLTTMAMAEFLYRSVQEFEDAGSIIISDTSLPFWKYFASSVDHKAGAKYNKNDQSFKTSLKSLTGWGDAFMRRAKYHTPSSGHMSEEFNRTTGEPRGAKDLTWSYASLLSAAFAREELRNQKNYLTNVADL.

The N-terminal stretch at 1–18 (MRQFLALAAAASIAVADS) is a signal peptide. In terms of domain architecture, CBM21 spans 26 to 132 (NSPPDDKAVA…NSQQLNVQVE (107 aa)). N54, N70, N98, N111, N168, N267, and N333 each carry an N-linked (GlcNAc...) asparagine glycan. D340 acts as the Proton acceptor in catalysis. E343 (proton donor) is an active-site residue. N-linked (GlcNAc...) asparagine glycosylation is found at N460 and N582.

The protein belongs to the glycosyl hydrolase 15 family.

It carries out the reaction Hydrolysis of terminal (1-&gt;4)-linked alpha-D-glucose residues successively from non-reducing ends of the chains with release of beta-D-glucose.. This chain is Glucoamylase (GAA), found in Blastobotrys adeninivorans (Yeast).